The sequence spans 555 residues: Cilia- and flagella-associated protein 184 (555 aa).

The segment covering 1 to 12 (MDVSSEHTKDPG) has biased composition (basic and acidic residues). Positions 1 to 202 (MDVSSEHTKD…KSQEEGKRLY (202 aa)) are disordered. Composition is skewed to acidic residues over residues 41 to 54 (GELE…EEEQ) and 95 to 105 (PEPEEPAEVGA). Positions 106 to 117 (EEPAQPEPGAGP) are enriched in low complexity. Positions 118–131 (EELEAEAGAEELEQ) are enriched in acidic residues. Residues 174 to 202 (ETQRDGAESKERDGEGRPAKSQEEGKRLY) show a composition bias toward basic and acidic residues. 2 coiled-coil regions span residues 305-441 (YHQE…NSVQ) and 505-531 (DSLL…LKRH).

The protein belongs to the CFAP184 family. As to quaternary structure, forms a complex with CFAP263; the interaction is required for functional activity in cilia.

It is found in the cell projection. The protein localises to the cilium. Its subcellular location is the cytoplasm. The protein resides in the cytoskeleton. It localises to the microtubule organizing center. It is found in the centrosome. Its function is as follows. In complex with CFAP263, acts as a regulator of ciliary beating that connects radial spoke 3 (RS3) to the inner dynein arm (IDA) and the nexin-dynein regulatory complex (N-DRC). The complex is positioned parallel to N-DRC and forms a connection between the arch at the base of RS3, the IDA tail and N-DRC. The chain is Cilia- and flagella-associated protein 184 from Homo sapiens (Human).